The following is a 75-amino-acid chain: Caerin 1.11 (75 aa).

Positions 1–22 are cleaved as a signal peptide; the sequence is MASLKKSLFLVLFLGFVSVSIC. Residues 23–49 constitute a propeptide that is removed on maturation; sequence EEEKRQEDEDEHEEEGENQEEGSEEKR. Residues 24 to 48 form a disordered region; that stretch reads EEKRQEDEDEHEEEGENQEEGSEEK. A compositionally biased stretch (acidic residues) spans 30–45; the sequence is DEDEHEEEGENQEEGS. Leucine 74 carries the leucine amide modification.

The protein belongs to the frog skin active peptide (FSAP) family. Caerin subfamily. In terms of tissue distribution, expressed by the skin glands.

It is found in the secreted. Its subcellular location is the target cell membrane. Cationic amphipathic alpha-helical antimicrobial peptide with weak or no activity against both Gram-positive and Gram-negative bacteria. Is weakly active against E.coli (MIC=25 uM), E.cloacae (MIC=50 uM), K.pneumoniae (MIC=25 uM), and S.haemolyticus (MIC=50 uM). Has no activity against S.typhimurium, S.enteritidis, B.megaterium, and S.aureus (MIC&gt;100 uM). In Ranoidea caerulea (Green tree frog), this protein is Caerin 1.11.